Here is a 564-residue protein sequence, read N- to C-terminus: Kelch-like protein 12 (564 aa).

The 68-residue stretch at 29–96 (CDVTLRVNLK…VYTETVHVTV (68 aa)) folds into the BTB domain. The BACK domain occupies 131-232 (CLGIRDFAET…LTPRYITDVI (102 aa)). 6 Kelch repeats span residues 278–325 (VLLV…SLGD), 327–375 (VYVI…TLGD), 376–422 (MIYV…VANG), 423–469 (VIYC…LLND), 471–516 (IYVV…VLRG), and 518–563 (LYAI…VLRE).

In terms of assembly, component of the BCR(KLHL12) E3 ubiquitin ligase complex.

Its subcellular location is the cytoplasmic vesicle. The protein localises to the COPII-coated vesicle. The protein operates within protein modification; protein ubiquitination. In terms of biological role, substrate-specific adapter of a BCR (BTB-CUL3-RBX1) E3 ubiquitin ligase complex that acts as a negative regulator of Wnt signaling pathway and ER-Golgi transport. The BCR(KLHL12) complex is involved in ER-Golgi transport by regulating the size of COPII coats, thereby playing a key role in collagen export, which is required for embryonic stem (ES) cells division. The sequence is that of Kelch-like protein 12 (klhl12) from Xenopus laevis (African clawed frog).